A 1013-amino-acid chain; its full sequence is Antigenic heat-stable 120 kDa protein (1013 aa).

Disordered regions lie at residues 1–73 (DTSE…TSDP) and 348–396 (GQSK…PQSQ). Residues 12–27 (EYTEEQKQKLEQEQKE) show a composition bias toward basic and acidic residues. A compositionally biased stretch (low complexity) spans 47 to 61 (SASSAQSTPSISALS). Polar residues-rich tracts occupy residues 62–73 (GNISPDSQTSDP), 348–373 (GQSKEQPLITPQQTASSSVESPQYKQ), and 380–396 (PTNQPLQPETSQMPQSQ).

It is found in the cytoplasm. This chain is Antigenic heat-stable 120 kDa protein (sca4), found in Rickettsia rhipicephali.